The following is a 187-amino-acid chain: POM121 and ZP3 fusion protein (187 aa).

The interval 166 to 187 (GTPSHSRRQPRVVSQWSTSASL) is disordered. The segment covering 177–187 (VVSQWSTSASL) has biased composition (polar residues).

In terms of tissue distribution, expressed in spleen, thymus, pancreas, testis, ovary, small intestine, colon and lymphocytes.

This Homo sapiens (Human) protein is POM121 and ZP3 fusion protein (POMZP3).